Here is a 507-residue protein sequence, read N- to C-terminus: Tyrosine protein-kinase src-2 (507 aa).

A compositionally biased stretch (basic and acidic residues) spans 1-10; sequence MGSCIGKEDP. The interval 1–52 is disordered; sequence MGSCIGKEDPPPGATSPVHTSSTLGRESLPSHPRIPSIGPIAASSSGNTIDK. Gly-2 carries the N-myristoyl glycine lipid modification. The span at 35–47 shows a compositional bias: low complexity; that stretch reads IPSIGPIAASSSG. An SH3 domain is found at 57–118; the sequence is SQSANFVALF…PSNYVAREKS (62 aa). Positions 124-216 constitute an SH2 domain; it reads WYFGKMRRID…GLCVNLGAPC (93 aa). The Protein kinase domain maps to 240 to 494; it reads VRLIRQIGAG…LQWKLEDLFN (255 aa). ATP contacts are provided by residues 246–254 and Lys-268; that span reads IGAGQFGEV. The Proton acceptor role is filled by Asp-358. Tyr-500 carries the phosphotyrosine modification.

It belongs to the protein kinase superfamily. Tyr protein kinase family. SRC subfamily. Requires Mg(2+) as cofactor. The cofactor is Mn(2+). May be phosphorylated on Tyr-500 by csk-1. Expressed in vulva, cells around anus and pharyngeal muscles.

The catalysed reaction is L-tyrosyl-[protein] + ATP = O-phospho-L-tyrosyl-[protein] + ADP + H(+). May be inhibited by csk-1-mediated phosphorylation at Tyr-500. Non-receptor tyrosine-protein kinase which may play a role in larval and pharynx development. Unlike src-1, does not play a role in embryonic development. This chain is Tyrosine protein-kinase src-2, found in Caenorhabditis elegans.